The sequence spans 208 residues: Protein-L-isoaspartate O-methyltransferase (208 aa).

Residue Ser59 is part of the active site.

It belongs to the methyltransferase superfamily. L-isoaspartyl/D-aspartyl protein methyltransferase family.

It localises to the cytoplasm. It carries out the reaction [protein]-L-isoaspartate + S-adenosyl-L-methionine = [protein]-L-isoaspartate alpha-methyl ester + S-adenosyl-L-homocysteine. Its function is as follows. Catalyzes the methyl esterification of L-isoaspartyl residues in peptides and proteins that result from spontaneous decomposition of normal L-aspartyl and L-asparaginyl residues. It plays a role in the repair and/or degradation of damaged proteins. The polypeptide is Protein-L-isoaspartate O-methyltransferase (Pectobacterium carotovorum subsp. carotovorum (strain PC1)).